The following is an 84-amino-acid chain: Dolichol phosphate-mannose biosynthesis regulatory protein (84 aa).

2 consecutive transmembrane segments (helical) span residues 11–31 (LGLV…VILL) and 49–69 (YAVA…GLFI).

This sequence belongs to the DPM2 family. As to quaternary structure, component of the dolichol-phosphate mannose (DPM) synthase complex composed of DPM1, DPM2 and DPM3; in the complex interacts directly with DPM3. Component of the glycosylphosphatidylinositol-N-acetylglucosaminyltransferase (GPI-GnT) complex composed at least by PIGA, PIGC, PIGH, PIGP, PIGQ, PIGY and DPM2. Interacts with PIGA, PIGC and PIGQ.

The protein localises to the endoplasmic reticulum membrane. The protein operates within protein modification; protein glycosylation. Functionally, regulates the biosynthesis of dolichol phosphate-mannose. Regulatory subunit of the dolichol-phosphate mannose (DPM) synthase complex; essential for the ER localization and stable expression of DPM1. Part of the glycosylphosphatidylinositol-N-acetylglucosaminyltransferase (GPI-GnT) complex that catalyzes the transfer of N-acetylglucosamine from UDP-N-acetylglucosamine to phosphatidylinositol and participates in the first step of GPI biosynthesis. May act by regulating the GPI-GNT complex. The chain is Dolichol phosphate-mannose biosynthesis regulatory protein from Homo sapiens (Human).